A 1807-amino-acid polypeptide reads, in one-letter code: Vitellogenin-A2 (1807 aa).

The first 15 residues, 1–15, serve as a signal peptide directing secretion; the sequence is MKGIVLALLLALAGS. The region spanning 24 to 664 is the Vitellogenin domain; that stretch reads FSESKISVYN…SANTMFPVFI (641 aa). Residues 953–974 form a disordered region; it reads TSAEGASMMEDSSEMGPKKYSA. N-linked (GlcNAc...) asparagine glycosylation occurs at asparagine 1094. Residues 1095–1320 form a disordered region; that stretch reads ETALYRSKQK…SSESSSSSSE (226 aa). The span at 1101–1111 shows a compositional bias: basic residues; that stretch reads SKQKKKNKIHN. Positions 1112–1123 are enriched in basic and acidic residues; that stretch reads RRLDAEVVEARK. Positions 1126–1163 are enriched in low complexity; that stretch reads SSLSSSSSSSSSSSSSSSSSSSSSSSSSPSSSSSSSYS. A compositionally biased stretch (basic and acidic residues) spans 1187-1198; that stretch reads QNKKRNLQENRK. Over residues 1205-1232 the composition is skewed to low complexity; the sequence is SSSSSSSSSSSSSSSSSSSSSSSSSSSS. Basic and acidic residues predominate over residues 1233-1247; sequence EENRPHKNRQHDNKQ. 2 stretches are compositionally biased toward low complexity: residues 1263-1276 and 1309-1320; these read SESS…SSSE and SSSSESSSSSSE. The 179-residue stretch at 1536–1714 folds into the VWFD domain; it reads GECKVAQDQI…SWILPAESCS (179 aa). 2 disulfide bridges follow: cysteine 1538/cysteine 1677 and cysteine 1561/cysteine 1713.

Produced by the liver, secreted into the blood and then sequestered by receptor mediated endocytosis into growing oocytes, where it is generally cleaved, giving rise to the respective yolk components.

In terms of biological role, precursor of the major egg-yolk proteins that are sources of nutrients during early development of oviparous organisms. This Xenopus laevis (African clawed frog) protein is Vitellogenin-A2.